Here is a 227-residue protein sequence, read N- to C-terminus: Ras-related protein Rab-3C (227 aa).

Residues S39, G42, K43, T44, S45, T56, S57, S61, and T62 each coordinate GTP. T44 serves as a coordination point for Mg(2+). A Switch 1 motif is present at residues 53 to 66 (DSFTSAFVSTVGID). Residues T62 and D85 each contribute to the Mg(2+) site. Phosphothreonine; by LRRK2 is present on T86. The Switch 2 motif lies at 86–104 (TAGQERYRTITTAYYRGAM). Residues G88, N143, K144, D146, A174, and K175 each coordinate GTP. Phosphoserine is present on residues S196 and S198. Residues 202 to 227 (DPAITAAKQSTRLKETPPPPQPNCGC) form a disordered region. T206 is subject to Phosphothreonine. Over residues 217–227 (TPPPPQPNCGC) the composition is skewed to pro residues. S-geranylgeranyl cysteine attachment occurs at residues C225 and C227. The residue at position 227 (C227) is a Cysteine methyl ester.

The protein belongs to the small GTPase superfamily. Rab family. As to quaternary structure, interacts with RIMS1, RIMS2, RPH3A and RPH3AL. Interacts with GDI2, CHM and CHML; phosphorylation at Thr-86 disrupts these interactions. Interacts with MADD (via uDENN domain); the GTP-bound form is preferred for interaction. Requires Mg(2+) as cofactor. In terms of processing, phosphorylation of Thr-86 in the switch II region by LRRK2 prevents the association of RAB regulatory proteins, including CHM, CHML and RAB GDP dissociation inhibitor GDI2.

Its subcellular location is the cell membrane. It catalyses the reaction GTP + H2O = GDP + phosphate + H(+). With respect to regulation, regulated by guanine nucleotide exchange factors (GEFs) which promote the exchange of bound GDP for free GTP. Regulated by GTPase activating proteins (GAPs) which increase the GTP hydrolysis activity. Inhibited by GDP dissociation inhibitors (GDIs) which prevent Rab-GDP dissociation. The small GTPases Rab are key regulators of intracellular membrane trafficking, from the formation of transport vesicles to their fusion with membranes. Rabs cycle between an inactive GDP-bound form and an active GTP-bound form that is able to recruit to membranes different sets of downstream effectors directly responsible for vesicle formation, movement, tethering and fusion. This is Ras-related protein Rab-3C from Mus musculus (Mouse).